The sequence spans 70 residues: Turripeptide Lol9.1 (70 aa).

The N-terminal stretch at 1 to 20 (MKVYCLLLVLLVGLVSQAHG) is a signal peptide. Positions 21-70 (KPTKRCLSVCSAEYEPVCGSDGKTYANKCHLMTEACWSPTSITLVHEGKC) constitute a Kazal-like domain. Disulfide bonds link cysteine 26/cysteine 56, cysteine 30/cysteine 49, and cysteine 38/cysteine 70.

Belongs to the conopeptide P-like superfamily. In terms of tissue distribution, expressed by the venom duct.

Its subcellular location is the secreted. Functionally, acts as a neurotoxin by inhibiting an ion channel. May also act as a serine protease inhibitor, since it possess the kazal serine protease inhibitor signature. The protein is Turripeptide Lol9.1 of Iotyrris olangoensis (Sea snail).